The primary structure comprises 77 residues: Acyl carrier protein (77 aa).

The 76-residue stretch at 2 to 77 (STVEERVKKI…DAIDYIVAHT (76 aa)) folds into the Carrier domain. Position 37 is an O-(pantetheine 4'-phosphoryl)serine (Ser37).

This sequence belongs to the acyl carrier protein (ACP) family. 4'-phosphopantetheine is transferred from CoA to a specific serine of apo-ACP by AcpS. This modification is essential for activity because fatty acids are bound in thioester linkage to the sulfhydryl of the prosthetic group.

The protein resides in the cytoplasm. Its pathway is lipid metabolism; fatty acid biosynthesis. Functionally, carrier of the growing fatty acid chain in fatty acid biosynthesis. In Marinobacter nauticus (strain ATCC 700491 / DSM 11845 / VT8) (Marinobacter aquaeolei), this protein is Acyl carrier protein.